Here is a 503-residue protein sequence, read N- to C-terminus: Carboxyl-terminal PDZ ligand of neuronal nitric oxide synthase protein (503 aa).

In terms of domain architecture, PID spans 26–191; the sequence is FQHGISFEAK…ESERNSDGSG (166 aa). Positions 170–212 are disordered; the sequence is HTQQNADGQEDGESERNSDGSGDPGRQLTGAERVSTATAEETD. Phosphoserine is present on residues Ser-183, Ser-187, Ser-190, and Ser-262. The disordered stretch occupies residues 266–285; that stretch reads LLPSSSSSKPPGLGTGTPLS. The stretch at 319 to 360 forms a coiled coil; sequence AAEAAARLEAQARVHQLLLQNKDMLQHISLLVKQVQELELKL. Ser-368, Ser-371, Ser-398, and Ser-414 each carry phosphoserine. Positions 491-503 are interaction with NOS1; the sequence is QELGDSLDDEIAV. Residues 501 to 503 carry the PDZ-binding motif; it reads IAV.

As to quaternary structure, interacts with the PDZ domain of NOS1 or the second PDZ domain of DLG4 through its C-terminus. Interacts with RASD1 and SYN1, SYN2 and SYN3 via its PID domain. Forms a ternary complex with NOS1 and RASD1. Forms a ternary complex with NOS1 and SYN1. In terms of tissue distribution, mainly expressed in brain. Highly expressed in accessory olfactory bulb, caudate-putamen, cerebellum, cerebral cortex, dentate gyrus of the hippocampus, islands of Calleja, olfactory bulb and supraoptic nucleus. Expressed in kidney glomeruli podocytes (at protein level).

Its subcellular location is the cell projection. It is found in the filopodium. It localises to the podosome. Its function is as follows. Adapter protein involved in neuronal nitric-oxide (NO) synthesis regulation via its association with nNOS/NOS1. The complex formed with NOS1 and synapsins is necessary for specific NO and synapsin functions at a presynaptic level. Mediates an indirect interaction between NOS1 and RASD1 leading to enhance the ability of NOS1 to activate RASD1. Competes with DLG4 for interaction with NOS1, possibly affecting NOS1 activity by regulating the interaction between NOS1 and DLG4. In kidney podocytes, plays a role in podosomes and filopodia formation through CDC42 activation. This is Carboxyl-terminal PDZ ligand of neuronal nitric oxide synthase protein from Rattus norvegicus (Rat).